The primary structure comprises 322 residues: Phospho-N-acetylmuramoyl-pentapeptide-transferase (322 aa).

Helical transmembrane passes span 6–26 (ASCI…PLLI), 54–74 (TMGG…VTAW), 82–102 (VWIL…DDGI), 122–142 (IIIA…FGLY), 145–165 (FAGV…WLVG), 176–196 (LDGL…YIAF), 200–220 (NFAI…FFIF), 227–247 (IFMG…VSIM), 255–275 (LLVG…VISF), and 302–322 (VDIV…AIWG).

The protein belongs to the glycosyltransferase 4 family. MraY subfamily. It depends on Mg(2+) as a cofactor.

It is found in the cell membrane. It carries out the reaction UDP-N-acetyl-alpha-D-muramoyl-L-alanyl-gamma-D-glutamyl-L-lysyl-D-alanyl-D-alanine + di-trans,octa-cis-undecaprenyl phosphate = Mur2Ac(oyl-L-Ala-gamma-D-Glu-L-Lys-D-Ala-D-Ala)-di-trans,octa-cis-undecaprenyl diphosphate + UMP. It functions in the pathway cell wall biogenesis; peptidoglycan biosynthesis. Catalyzes the initial step of the lipid cycle reactions in the biosynthesis of the cell wall peptidoglycan: transfers peptidoglycan precursor phospho-MurNAc-pentapeptide from UDP-MurNAc-pentapeptide onto the lipid carrier undecaprenyl phosphate, yielding undecaprenyl-pyrophosphoryl-MurNAc-pentapeptide, known as lipid I. The polypeptide is Phospho-N-acetylmuramoyl-pentapeptide-transferase (Lactobacillus helveticus (strain DPC 4571)).